We begin with the raw amino-acid sequence, 145 residues long: Phospholipase A2 (145 aa).

An N-terminal signal peptide occupies residues 1 to 15; sequence MRLLVLAALLTVGAG. Glutamine 16 bears the Pyrrolidone carboxylic acid mark. A propeptide spans 16 to 22 (removed by trypsin); the sequence is QAGLNSR. Intrachain disulfides connect cysteine 33–cysteine 99, cysteine 49–cysteine 145, cysteine 51–cysteine 67, cysteine 66–cysteine 127, cysteine 73–cysteine 120, cysteine 83–cysteine 113, and cysteine 106–cysteine 118. Positions 50, 52, and 54 each coordinate Ca(2+). The active site involves histidine 70. A Ca(2+)-binding site is contributed by aspartate 71. The active site involves aspartate 121.

This sequence belongs to the phospholipase A2 family. In terms of assembly, monomer or homodimer. Requires Ca(2+) as cofactor. In terms of processing, activated by trypsin cleavage in the duodenum. Can also be activated by thrombin or autocatalytically.

Its subcellular location is the secreted. The catalysed reaction is a 1,2-diacyl-sn-glycero-3-phosphocholine + H2O = a 1-acyl-sn-glycero-3-phosphocholine + a fatty acid + H(+). It carries out the reaction 1,2-ditetradecanoyl-sn-glycero-3-phosphocholine + H2O = 1-tetradecanoyl-sn-glycero-3-phosphocholine + tetradecanoate + H(+). It catalyses the reaction 1,2-dihexadecanoyl-sn-glycero-3-phosphocholine + H2O = 1-hexadecanoyl-sn-glycero-3-phosphocholine + hexadecanoate + H(+). The enzyme catalyses 1-hexadecanoyl-2-(9Z-octadecenoyl)-sn-glycero-3-phosphocholine + H2O = 1-hexadecanoyl-sn-glycero-3-phosphocholine + (9Z)-octadecenoate + H(+). The catalysed reaction is 1-hexadecanoyl-2-(5Z,8Z,11Z,14Z-eicosatetraenoyl)-sn-glycero-3-phosphocholine + H2O = 1-hexadecanoyl-sn-glycero-3-phosphocholine + (5Z,8Z,11Z,14Z)-eicosatetraenoate + H(+). It carries out the reaction 1-hexadecanoyl-2-(9Z-octadecenoyl)-sn-glycero-3-phospho-(1'-sn-glycerol) + H2O = 1-hexadecanoyl-sn-glycero-3-phospho-(1'-sn-glycerol) + (9Z)-octadecenoate + H(+). It catalyses the reaction N-hexadecanoyl-1,2-di-(9Z-octadecenoyl)-sn-glycero-3-phosphoethanolamine + H2O = N-hexadecanoyl-1-(9Z-octadecenoyl)-sn-glycero-3-phosphoethanolamine + (9Z)-octadecenoate + H(+). The enzyme catalyses 1-hexadecanoyl-2-(9Z,12Z-octadecadienoyl)-sn-glycero-3-phosphoethanolamine + H2O = 1-hexadecanoyl-sn-glycero-3-phosphoethanolamine + (9Z,12Z)-octadecadienoate + H(+). The catalysed reaction is N,1-dihexadecanoyl-2-(9Z,12Z-octadecadienoyl)-sn-glycero-3-phosphoethanolamine + H2O = N,1-dihexadecanoyl-sn-glycero-3-phosphoethanolamine + (9Z,12Z)-octadecadienoate + H(+). Its function is as follows. Secretory calcium-dependent phospholipase A2 that primarily targets dietary phospholipids in the intestinal tract. Hydrolyzes the ester bond of the fatty acyl group attached at sn-2 position of phospholipids (phospholipase A2 activity) with preference for phosphatidylethanolamines and phosphatidylglycerols over phosphatidylcholines. May play a role in the biosynthesis of N-acyl ethanolamines that regulate energy metabolism and inflammation in the intestinal tract. Hydrolyzes N-acyl phosphatidylethanolamines to N-acyl lysophosphatidylethanolamines, which are further cleaved by a lysophospholipase D to release N-acyl ethanolamines. May act in an autocrine and paracrine manner. Has anti-helminth activity in a process regulated by gut microbiota. Upon helminth infection of intestinal epithelia, directly affects phosphatidylethanolamine contents in the membrane of helminth larvae, likely controlling an array of phospholipid-mediated cellular processes such as membrane fusion and cell division while providing for better immune recognition, ultimately reducing larvae integrity and infectivity. The polypeptide is Phospholipase A2 (PLA2G1B) (Bos taurus (Bovine)).